The primary structure comprises 300 residues: DNA repair protein RecO (300 aa).

It belongs to the RecO family.

In terms of biological role, involved in DNA repair and RecF pathway recombination. This Nostoc punctiforme (strain ATCC 29133 / PCC 73102) protein is DNA repair protein RecO.